The sequence spans 103 residues: Small ribosomal subunit protein uS10 (103 aa).

The protein belongs to the universal ribosomal protein uS10 family. Part of the 30S ribosomal subunit.

In terms of biological role, involved in the binding of tRNA to the ribosomes. The polypeptide is Small ribosomal subunit protein uS10 (Korarchaeum cryptofilum (strain OPF8)).